The following is a 360-amino-acid chain: Phospho-N-acetylmuramoyl-pentapeptide-transferase (360 aa).

10 helical membrane passes run 26–46 (AIVS…RMIA), 72–92 (PTMG…LWAY), 94–114 (SNPY…IGFV), 132–152 (WKYF…YLAG), 168–188 (VMPQ…VGTG), 199–219 (GLAI…AWAT), 236–256 (AGEL…FLWF), 263–283 (VFMG…IAVL), 288–308 (FLLV…ILQV), and 338–358 (VIVR…ATLK).

This sequence belongs to the glycosyltransferase 4 family. MraY subfamily. It depends on Mg(2+) as a cofactor.

The protein localises to the cell inner membrane. The enzyme catalyses UDP-N-acetyl-alpha-D-muramoyl-L-alanyl-gamma-D-glutamyl-meso-2,6-diaminopimeloyl-D-alanyl-D-alanine + di-trans,octa-cis-undecaprenyl phosphate = di-trans,octa-cis-undecaprenyl diphospho-N-acetyl-alpha-D-muramoyl-L-alanyl-D-glutamyl-meso-2,6-diaminopimeloyl-D-alanyl-D-alanine + UMP. The protein operates within cell wall biogenesis; peptidoglycan biosynthesis. In terms of biological role, catalyzes the initial step of the lipid cycle reactions in the biosynthesis of the cell wall peptidoglycan: transfers peptidoglycan precursor phospho-MurNAc-pentapeptide from UDP-MurNAc-pentapeptide onto the lipid carrier undecaprenyl phosphate, yielding undecaprenyl-pyrophosphoryl-MurNAc-pentapeptide, known as lipid I. This is Phospho-N-acetylmuramoyl-pentapeptide-transferase from Enterobacter sp. (strain 638).